The following is a 262-amino-acid chain: Polyamine aminopropyltransferase (262 aa).

A PABS domain is found at Met-1–Pro-249. Asn-29 provides a ligand contact to S-methyl-5'-thioadenosine. Asp-83 is a spermidine binding site. Asp-155 acts as the Proton acceptor in catalysis.

Belongs to the spermidine/spermine synthase family. As to quaternary structure, homodimer or homotetramer.

The protein resides in the cytoplasm. It carries out the reaction S-adenosyl 3-(methylsulfanyl)propylamine + putrescine = S-methyl-5'-thioadenosine + spermidine + H(+). It participates in amine and polyamine biosynthesis; spermidine biosynthesis; spermidine from putrescine: step 1/1. Catalyzes the irreversible transfer of a propylamine group from the amino donor S-adenosylmethioninamine (decarboxy-AdoMet) to putrescine (1,4-diaminobutane) to yield spermidine. This Helicobacter pylori (strain P12) protein is Polyamine aminopropyltransferase.